Here is a 118-residue protein sequence, read N- to C-terminus: Large ribosomal subunit protein uL18 (118 aa).

Belongs to the universal ribosomal protein uL18 family. In terms of assembly, part of the 50S ribosomal subunit; part of the 5S rRNA/L5/L18/L25 subcomplex. Contacts the 5S and 23S rRNAs.

Its function is as follows. This is one of the proteins that bind and probably mediate the attachment of the 5S RNA into the large ribosomal subunit, where it forms part of the central protuberance. The chain is Large ribosomal subunit protein uL18 from Rickettsia conorii (strain ATCC VR-613 / Malish 7).